Here is a 433-residue protein sequence, read N- to C-terminus: MSYVKVEKASSFELTISDIAPDKSISHRSAMFSLLSDEPSQIENFLRAEDTLNTLEIVKALGAQVEESDEKILIKPPKQIQEPKDVLDCGNSGTGMRLFCGLLAGINGFFVLTGDKYLRERPMARVAKPLRSIGAKIDGRDNGNKAPLALRGNTDLEPFDYESPIASAQVKSALILAALRAKGECSISEPELSRDHTERMLQGMGANIDTHWSHGRYRVDVVPLTKPLEPLKIRIPADPSSAFFFAVAAAIAPRSKVVLENITLNPTRIEAFKVLQKMGADVVFLEKENKYEPIGDIIVTHNSLHGVEVSENIPWLIDELPALAIAMAVADGRSIVRNAKELRVKESDRITCVVENLKKCGIQAQEFEDGYEIIGGELHSAAIDSCGDHRIAMSFLIAGLVSGMEVRDIECIKTSFPNFLDLLSQIVKVERGD.

3-phosphoshikimate is bound by residues Lys-23, Ser-24, and Arg-28. Residue Lys-23 coordinates phosphoenolpyruvate. Positions 93 and 121 each coordinate phosphoenolpyruvate. 3-phosphoshikimate contacts are provided by Ser-167, Gln-169, Asp-318, and Lys-345. A phosphoenolpyruvate-binding site is contributed by Gln-169. Asp-318 (proton acceptor) is an active-site residue. Residues Arg-349 and Arg-390 each contribute to the phosphoenolpyruvate site.

The protein belongs to the EPSP synthase family. In terms of assembly, monomer.

It is found in the cytoplasm. It catalyses the reaction 3-phosphoshikimate + phosphoenolpyruvate = 5-O-(1-carboxyvinyl)-3-phosphoshikimate + phosphate. Its pathway is metabolic intermediate biosynthesis; chorismate biosynthesis; chorismate from D-erythrose 4-phosphate and phosphoenolpyruvate: step 6/7. Functionally, catalyzes the transfer of the enolpyruvyl moiety of phosphoenolpyruvate (PEP) to the 5-hydroxyl of shikimate-3-phosphate (S3P) to produce enolpyruvyl shikimate-3-phosphate and inorganic phosphate. The polypeptide is 3-phosphoshikimate 1-carboxyvinyltransferase (Nitratiruptor sp. (strain SB155-2)).